The chain runs to 264 residues: MRIALGIEYNGTNYFGWQRQREVKSVQEELEKALSVVANHPVEVQCAGRTDAGVHGTGQVVHFDTNVSRKMVAWTMGANANMPSDIAVRWAVEVNDDFHARFSATARRYRYIIFNHALRPGILNSGVSHYHGELDEKKMHEAGQYLLGENDFSSFRAAHCQSLSPCRNMMHLNVTRHGDYIVIDIKANAFVHHMVRNITGSLIKVGRGEEKPEWIKSLLEAKDRKLAGATAKAEGLYLVDVDYPEEFGLPRVPIGPLFLPDNLN.

Catalysis depends on D51, which acts as the Nucleophile. Y109 contributes to the substrate binding site.

Belongs to the tRNA pseudouridine synthase TruA family. As to quaternary structure, homodimer.

It carries out the reaction uridine(38/39/40) in tRNA = pseudouridine(38/39/40) in tRNA. Its function is as follows. Formation of pseudouridine at positions 38, 39 and 40 in the anticodon stem and loop of transfer RNAs. This Vibrio campbellii (strain ATCC BAA-1116) protein is tRNA pseudouridine synthase A.